Here is a 258-residue protein sequence, read N- to C-terminus: F-box/LRR-repeat protein 25 (258 aa).

The F-box domain maps to Ser-27–Leu-76. LRR repeat units lie at residues Cys-101–Phe-130, Cys-136–Pro-161, Arg-177–Phe-202, and Arg-224–Asp-249.

This Arabidopsis thaliana (Mouse-ear cress) protein is F-box/LRR-repeat protein 25 (FBL25).